A 493-amino-acid chain; its full sequence is UDP-N-acetylmuramate--L-alanine ligase (493 aa).

112–118 (GTHGKTT) contacts ATP.

The protein belongs to the MurCDEF family.

Its subcellular location is the cytoplasm. The catalysed reaction is UDP-N-acetyl-alpha-D-muramate + L-alanine + ATP = UDP-N-acetyl-alpha-D-muramoyl-L-alanine + ADP + phosphate + H(+). It functions in the pathway cell wall biogenesis; peptidoglycan biosynthesis. Its function is as follows. Cell wall formation. The chain is UDP-N-acetylmuramate--L-alanine ligase from Nitrosospira multiformis (strain ATCC 25196 / NCIMB 11849 / C 71).